The primary structure comprises 576 residues: Aspartate--tRNA ligase (576 aa).

Glu171 contributes to the L-aspartate binding site. The segment at 195–198 (QLFK) is aspartate. Arg217 contributes to the L-aspartate binding site. ATP is bound by residues 217–219 (RDE) and Gln226. His450 is a binding site for L-aspartate. Residue Glu484 participates in ATP binding. Arg491 serves as a coordination point for L-aspartate. 536–539 (GLDR) is an ATP binding site.

This sequence belongs to the class-II aminoacyl-tRNA synthetase family. Type 1 subfamily. In terms of assembly, homodimer.

It is found in the cytoplasm. The catalysed reaction is tRNA(Asp) + L-aspartate + ATP = L-aspartyl-tRNA(Asp) + AMP + diphosphate. Functionally, catalyzes the attachment of L-aspartate to tRNA(Asp) in a two-step reaction: L-aspartate is first activated by ATP to form Asp-AMP and then transferred to the acceptor end of tRNA(Asp). In Buchnera aphidicola subsp. Baizongia pistaciae (strain Bp), this protein is Aspartate--tRNA ligase.